A 347-amino-acid chain; its full sequence is L-threonine 3-dehydrogenase (347 aa).

Cys-43 is a binding site for Zn(2+). Catalysis depends on charge relay system residues Thr-45 and His-48. Zn(2+)-binding residues include His-68, Glu-69, Cys-98, Cys-101, Cys-104, and Cys-112. NAD(+) is bound by residues Ile-180, Asp-200, Arg-205, 267 to 269 (LSL), and 292 to 293 (IT).

It belongs to the zinc-containing alcohol dehydrogenase family. As to quaternary structure, homotetramer. Zn(2+) serves as cofactor.

The protein resides in the cytoplasm. The enzyme catalyses L-threonine + NAD(+) = (2S)-2-amino-3-oxobutanoate + NADH + H(+). It participates in amino-acid degradation; L-threonine degradation via oxydo-reductase pathway; glycine from L-threonine: step 1/2. Catalyzes the NAD(+)-dependent oxidation of L-threonine to 2-amino-3-ketobutyrate. The chain is L-threonine 3-dehydrogenase from Bacillus subtilis (strain 168).